Consider the following 194-residue polypeptide: Peptidyl-tRNA hydrolase (194 aa).

Tyr-17 is a binding site for tRNA. The active-site Proton acceptor is His-22. TRNA contacts are provided by Phe-68, Asn-70, and Asn-116.

It belongs to the PTH family. Monomer.

It is found in the cytoplasm. It carries out the reaction an N-acyl-L-alpha-aminoacyl-tRNA + H2O = an N-acyl-L-amino acid + a tRNA + H(+). Hydrolyzes ribosome-free peptidyl-tRNAs (with 1 or more amino acids incorporated), which drop off the ribosome during protein synthesis, or as a result of ribosome stalling. Functionally, catalyzes the release of premature peptidyl moieties from peptidyl-tRNA molecules trapped in stalled 50S ribosomal subunits, and thus maintains levels of free tRNAs and 50S ribosomes. This is Peptidyl-tRNA hydrolase from Actinobacillus pleuropneumoniae serotype 7 (strain AP76).